The primary structure comprises 292 residues: 4-hydroxy-tetrahydrodipicolinate synthase (292 aa).

Thr-45 contacts pyruvate. The active-site Proton donor/acceptor is the Tyr-134. Lys-162 functions as the Schiff-base intermediate with substrate in the catalytic mechanism. Val-204 provides a ligand contact to pyruvate.

Belongs to the DapA family. In terms of assembly, homotetramer; dimer of dimers.

It localises to the cytoplasm. The enzyme catalyses L-aspartate 4-semialdehyde + pyruvate = (2S,4S)-4-hydroxy-2,3,4,5-tetrahydrodipicolinate + H2O + H(+). The protein operates within amino-acid biosynthesis; L-lysine biosynthesis via DAP pathway; (S)-tetrahydrodipicolinate from L-aspartate: step 3/4. Catalyzes the condensation of (S)-aspartate-beta-semialdehyde [(S)-ASA] and pyruvate to 4-hydroxy-tetrahydrodipicolinate (HTPA). The protein is 4-hydroxy-tetrahydrodipicolinate synthase of Marinobacter nauticus (strain ATCC 700491 / DSM 11845 / VT8) (Marinobacter aquaeolei).